Reading from the N-terminus, the 264-residue chain is 3-methyl-2-oxobutanoate hydroxymethyltransferase (264 aa).

Residues Asp45 and Asp84 each coordinate Mg(2+). Residues 45-46, Asp84, and Lys112 each bind 3-methyl-2-oxobutanoate; that span reads DS. Glu114 provides a ligand contact to Mg(2+). The active-site Proton acceptor is Glu181.

Belongs to the PanB family. Homodecamer; pentamer of dimers. Requires Mg(2+) as cofactor.

The protein resides in the cytoplasm. The catalysed reaction is 3-methyl-2-oxobutanoate + (6R)-5,10-methylene-5,6,7,8-tetrahydrofolate + H2O = 2-dehydropantoate + (6S)-5,6,7,8-tetrahydrofolate. The protein operates within cofactor biosynthesis; (R)-pantothenate biosynthesis; (R)-pantoate from 3-methyl-2-oxobutanoate: step 1/2. Functionally, catalyzes the reversible reaction in which hydroxymethyl group from 5,10-methylenetetrahydrofolate is transferred onto alpha-ketoisovalerate to form ketopantoate. The polypeptide is 3-methyl-2-oxobutanoate hydroxymethyltransferase (Aeromonas salmonicida (strain A449)).